We begin with the raw amino-acid sequence, 158 residues long: 6,7-dimethyl-8-ribityllumazine synthase (158 aa).

5-amino-6-(D-ribitylamino)uracil is bound by residues F23, 57–59 (AFE), and 81–83 (TVI). 86–87 (GT) serves as a coordination point for (2S)-2-hydroxy-3-oxobutyl phosphate. Catalysis depends on H89, which acts as the Proton donor. 5-amino-6-(D-ribitylamino)uracil is bound at residue F114. R128 serves as a coordination point for (2S)-2-hydroxy-3-oxobutyl phosphate.

This sequence belongs to the DMRL synthase family.

It catalyses the reaction (2S)-2-hydroxy-3-oxobutyl phosphate + 5-amino-6-(D-ribitylamino)uracil = 6,7-dimethyl-8-(1-D-ribityl)lumazine + phosphate + 2 H2O + H(+). The protein operates within cofactor biosynthesis; riboflavin biosynthesis; riboflavin from 2-hydroxy-3-oxobutyl phosphate and 5-amino-6-(D-ribitylamino)uracil: step 1/2. Functionally, catalyzes the formation of 6,7-dimethyl-8-ribityllumazine by condensation of 5-amino-6-(D-ribitylamino)uracil with 3,4-dihydroxy-2-butanone 4-phosphate. This is the penultimate step in the biosynthesis of riboflavin. In Desulforudis audaxviator (strain MP104C), this protein is 6,7-dimethyl-8-ribityllumazine synthase.